The following is a 369-amino-acid chain: Ferredoxin--NADP reductase 2 (369 aa).

The disordered stretch occupies residues 1-23 (MDLSIPNPVADTTKQVDGGSPAG). The FAD site is built by aspartate 58, glutamine 66, tyrosine 71, valine 111, phenylalanine 146, aspartate 311, and threonine 352.

The protein belongs to the ferredoxin--NADP reductase type 2 family. In terms of assembly, homodimer. The cofactor is FAD.

It carries out the reaction 2 reduced [2Fe-2S]-[ferredoxin] + NADP(+) + H(+) = 2 oxidized [2Fe-2S]-[ferredoxin] + NADPH. The chain is Ferredoxin--NADP reductase 2 from Cupriavidus necator (strain ATCC 17699 / DSM 428 / KCTC 22496 / NCIMB 10442 / H16 / Stanier 337) (Ralstonia eutropha).